Consider the following 350-residue polypeptide: tRNA uridine(34) hydroxylase (350 aa).

Residues 146–240 (DDPDAVFIDM…YARKAREQGL (95 aa)) enclose the Rhodanese domain. The active-site Cysteine persulfide intermediate is C200. The interval 314 to 350 (PEEEQRRRRAGRENGNKIFNKSRGRLNTQLGIPDPAE) is disordered. Over residues 316-328 (EEQRRRRAGRENG) the composition is skewed to basic and acidic residues.

It belongs to the TrhO family.

It carries out the reaction uridine(34) in tRNA + AH2 + O2 = 5-hydroxyuridine(34) in tRNA + A + H2O. Its function is as follows. Catalyzes oxygen-dependent 5-hydroxyuridine (ho5U) modification at position 34 in tRNAs. The polypeptide is tRNA uridine(34) hydroxylase (Citrobacter koseri (strain ATCC BAA-895 / CDC 4225-83 / SGSC4696)).